The chain runs to 227 residues: Urease accessory protein UreF 2 (227 aa).

It belongs to the UreF family. In terms of assembly, ureD, UreF and UreG form a complex that acts as a GTP-hydrolysis-dependent molecular chaperone, activating the urease apoprotein by helping to assemble the nickel containing metallocenter of UreC. The UreE protein probably delivers the nickel.

It localises to the cytoplasm. Functionally, required for maturation of urease via the functional incorporation of the urease nickel metallocenter. This Brucella anthropi (strain ATCC 49188 / DSM 6882 / CCUG 24695 / JCM 21032 / LMG 3331 / NBRC 15819 / NCTC 12168 / Alc 37) (Ochrobactrum anthropi) protein is Urease accessory protein UreF 2.